Consider the following 421-residue polypeptide: 3-hydroxy-3-methylglutaryl-coenzyme A reductase (421 aa).

Residues E109, K240, and D315 each act as charge relay system in the active site. H410 functions as the Proton donor in the catalytic mechanism.

The protein belongs to the HMG-CoA reductase family.

It carries out the reaction (R)-mevalonate + 2 NADP(+) + CoA = (3S)-3-hydroxy-3-methylglutaryl-CoA + 2 NADPH + 2 H(+). Its pathway is metabolic intermediate biosynthesis; (R)-mevalonate biosynthesis; (R)-mevalonate from acetyl-CoA: step 3/3. Converts HMG-CoA to mevalonate. The sequence is that of 3-hydroxy-3-methylglutaryl-coenzyme A reductase (hmgA) from Aeropyrum pernix (strain ATCC 700893 / DSM 11879 / JCM 9820 / NBRC 100138 / K1).